A 180-amino-acid chain; its full sequence is ATP-dependent protease subunit HslV (180 aa).

Residue Thr2 is part of the active site. Gly157, Cys160, and Thr163 together coordinate Na(+).

The protein belongs to the peptidase T1B family. HslV subfamily. A double ring-shaped homohexamer of HslV is capped on each side by a ring-shaped HslU homohexamer. The assembly of the HslU/HslV complex is dependent on binding of ATP.

The protein resides in the cytoplasm. The enzyme catalyses ATP-dependent cleavage of peptide bonds with broad specificity.. Allosterically activated by HslU binding. Protease subunit of a proteasome-like degradation complex believed to be a general protein degrading machinery. In Tolumonas auensis (strain DSM 9187 / NBRC 110442 / TA 4), this protein is ATP-dependent protease subunit HslV.